The chain runs to 144 residues: uncharacterized protein (144 aa).

The first 16 residues, 1-16 (MRKFLIVLLLPLLVLA), serve as a signal peptide directing secretion.

This is an uncharacterized protein from Aquifex aeolicus (strain VF5).